The sequence spans 92 residues: Small ribosomal subunit protein bS20 (92 aa).

The segment at M1–H20 is disordered.

It belongs to the bacterial ribosomal protein bS20 family.

Its function is as follows. Binds directly to 16S ribosomal RNA. The chain is Small ribosomal subunit protein bS20 from Methylococcus capsulatus (strain ATCC 33009 / NCIMB 11132 / Bath).